A 199-amino-acid chain; its full sequence is Melanocortin-2 receptor accessory protein 2B (199 aa).

A glycan (N-linked (GlcNAc...) asparagine) is linked at N6. A helical transmembrane segment spans residues 39 to 59 (IVIGFWVGLAVFVIFMFFVLT).

The protein belongs to the MRAP family. In terms of assembly, interacts with mc4r. Expressed in adult brain.

The protein localises to the cell membrane. The protein resides in the endoplasmic reticulum membrane. Activator of melanocortin receptor 4 (mc4r), a receptor involved in energy homeostasis. Plays a role after larval development in the control of energy homeostasis and body weight regulation by increasing ligand-sensitivity of mc4r and mc4r-mediated generation of cAMP once the zebrafish begins feeding, increasing the capacity for regulated feeding and growth. The sequence is that of Melanocortin-2 receptor accessory protein 2B (mrap2b) from Danio rerio (Zebrafish).